The primary structure comprises 66 residues: Large ribosomal subunit protein bL32 (66 aa).

The protein belongs to the bacterial ribosomal protein bL32 family.

The protein is Large ribosomal subunit protein bL32 of Rickettsia canadensis (strain McKiel).